We begin with the raw amino-acid sequence, 152 residues long: HTH-type transcriptional regulator SlrR (152 aa).

One can recognise an HTH cro/C1-type domain in the interval 6–61 (IRLYRKRKGYSINQLAVESGVSKSYLSKIERGVHTNPSVQFLKKVSATLEVELTEL). A DNA-binding region (H-T-H motif) is located at residues 17–36 (INQLAVESGVSKSYLSKIER). Residues 113–151 (YRNRKLTESNIEEWKALMAEAREIGLSVHEVKSFLKTKG) form the Sin domain.

As to quaternary structure, component of the SlrR/SlrA complex.

In terms of biological role, represses sigma(D)-dependent flagellar genes and activate the eps and yqxM operons. Repressor activity is regulated by SlrA. Controls the initiation of biofilm formation. This is HTH-type transcriptional regulator SlrR (slrR) from Bacillus subtilis (strain 168).